Consider the following 325-residue polypeptide: NADH-quinone oxidoreductase subunit H (325 aa).

The next 8 helical transmembrane spans lie at 5–25 (LIII…AAAY), 75–95 (FVYW…FVLI), 117–137 (VGVV…VLAG), 157–177 (ISYE…TGTL), 190–210 (WLIW…FAET), 240–260 (FFLG…TLFF), 268–288 (DIPI…FMWV), and 305–325 (WKVL…FTLV).

Belongs to the complex I subunit 1 family. As to quaternary structure, NDH-1 is composed of 14 different subunits. Subunits NuoA, H, J, K, L, M, N constitute the membrane sector of the complex.

The protein resides in the cell inner membrane. It catalyses the reaction a quinone + NADH + 5 H(+)(in) = a quinol + NAD(+) + 4 H(+)(out). NDH-1 shuttles electrons from NADH, via FMN and iron-sulfur (Fe-S) centers, to quinones in the respiratory chain. The immediate electron acceptor for the enzyme in this species is believed to be ubiquinone. Couples the redox reaction to proton translocation (for every two electrons transferred, four hydrogen ions are translocated across the cytoplasmic membrane), and thus conserves the redox energy in a proton gradient. This subunit may bind ubiquinone. The sequence is that of NADH-quinone oxidoreductase subunit H from Protochlamydia amoebophila (strain UWE25).